A 96-amino-acid polypeptide reads, in one-letter code: UPF0235 protein VC_0458 (96 aa).

Belongs to the UPF0235 family.

This Vibrio cholerae serotype O1 (strain ATCC 39315 / El Tor Inaba N16961) protein is UPF0235 protein VC_0458.